A 154-amino-acid polypeptide reads, in one-letter code: Proteinase inhibitor type-2 P303.51 (154 aa).

The N-terminal stretch at 1–25 is a signal peptide; that stretch reads MAVHKEVNFVAYLLIVLGLLVLVSA. 2 consecutive repeat copies span residues 31–87 and 88–147. 8 disulfide bridges follow: cysteine 34-cysteine 122, cysteine 38-cysteine 118, cysteine 46-cysteine 128, cysteine 58-cysteine 95, cysteine 61-cysteine 79, cysteine 62-cysteine 91, cysteine 68-cysteine 104, and cysteine 121-cysteine 139.

It belongs to the protease inhibitor I20 (potato type II proteinase inhibitor) family.

The sequence is that of Proteinase inhibitor type-2 P303.51 from Solanum tuberosum (Potato).